Reading from the N-terminus, the 374-residue chain is Tuliposide A-converting enzyme b2, amyloplastic (374 aa).

Residues 1-68 constitute an amyloplast transit peptide; it reads MSVALFCGPP…TNSSLSPSPT (68 aa). S226 (acyl-ester intermediate) is an active-site residue. Active-site charge relay system residues include D316 and H348.

It belongs to the AB hydrolase superfamily. Homodimer. As to expression, highly expressed in pistil and bulb scales. Lower expression in stem, and barely detected in root, leaf, petal and stamen.

Its subcellular location is the plastid. The protein resides in the amyloplast. It catalyses the reaction 6-tuliposide A = tulipalin A + D-glucose. In terms of biological role, lactone-forming carboxylesterases, specifically catalyzing intramolecular transesterification, but not hydrolysis. Involved in the biosynthesis of tulipalins, defensive chemicals that show antimicrobial activities against a broad range of strains of bacteria and fungi. Substrates are 6-tuliposide A &gt; 6-tuliposide B. This is Tuliposide A-converting enzyme b2, amyloplastic (TCEA-B2) from Tulipa gesneriana (Garden tulip).